The sequence spans 206 residues: uncharacterized protein (206 aa).

A signal peptide spans 1–17 (MKGKILFALFLSAGVIA). Cysteine 18 carries the N-palmitoyl cysteine lipid modification. Residue cysteine 18 is the site of S-diacylglycerol cysteine attachment. A coiled-coil region spans residues 21–58 (ASQAAKQQEVKVAKAETKTKKKESKAEKFRKALAAQDK). A Cytochrome c domain is found at 97–201 (GDWRKGESLA…DIVAYLHDPE (105 aa)). 3 residues coordinate heme c: cysteine 127, cysteine 130, and histidine 131.

It localises to the cell membrane. This is an uncharacterized protein from Aquifex aeolicus (strain VF5).